Reading from the N-terminus, the 256-residue chain is Flap endonuclease Xni (256 aa).

A Mg(2+)-binding site is contributed by Asp-105. A 5'-3' exonuclease domain is found at 164-250; sequence SQFIDFLAMA…LNTRLANFRV (87 aa). Positions 172, 173, 181, 183, and 186 each coordinate K(+). The interval 185 to 190 is interaction with DNA; the sequence is GIGPKS.

It belongs to the Xni family. It depends on Mg(2+) as a cofactor. The cofactor is K(+).

In terms of biological role, has flap endonuclease activity. During DNA replication, flap endonucleases cleave the 5'-overhanging flap structure that is generated by displacement synthesis when DNA polymerase encounters the 5'-end of a downstream Okazaki fragment. This chain is Flap endonuclease Xni, found in Shewanella loihica (strain ATCC BAA-1088 / PV-4).